A 243-amino-acid chain; its full sequence is Pyridoxine 5'-phosphate synthase (243 aa).

Asn-9 provides a ligand contact to 3-amino-2-oxopropyl phosphate. 1-deoxy-D-xylulose 5-phosphate is bound at residue 11 to 12 (DH). Arg-20 contacts 3-amino-2-oxopropyl phosphate. The Proton acceptor role is filled by His-45. Positions 47 and 52 each coordinate 1-deoxy-D-xylulose 5-phosphate. The active-site Proton acceptor is Glu-72. 1-deoxy-D-xylulose 5-phosphate is bound at residue Thr-102. His-193 serves as the catalytic Proton donor. 3-amino-2-oxopropyl phosphate contacts are provided by residues Gly-194 and 215–216 (GH).

The protein belongs to the PNP synthase family. As to quaternary structure, homooctamer; tetramer of dimers.

The protein resides in the cytoplasm. The catalysed reaction is 3-amino-2-oxopropyl phosphate + 1-deoxy-D-xylulose 5-phosphate = pyridoxine 5'-phosphate + phosphate + 2 H2O + H(+). Its pathway is cofactor biosynthesis; pyridoxine 5'-phosphate biosynthesis; pyridoxine 5'-phosphate from D-erythrose 4-phosphate: step 5/5. Its function is as follows. Catalyzes the complicated ring closure reaction between the two acyclic compounds 1-deoxy-D-xylulose-5-phosphate (DXP) and 3-amino-2-oxopropyl phosphate (1-amino-acetone-3-phosphate or AAP) to form pyridoxine 5'-phosphate (PNP) and inorganic phosphate. In Shigella sonnei (strain Ss046), this protein is Pyridoxine 5'-phosphate synthase.